Here is a 956-residue protein sequence, read N- to C-terminus: Chromatin assembly factor 1 subunit A (956 aa).

The segment at 1–49 (MLEELECGAPGARGAATAMDCKDRPAFPVKKLIQARLPFKRLNLVPKGK) is binds to PCNA. The binds to CBX1 chromo shadow domain stretch occupies residues 1 to 314 (MLEELECGAP…QHSSTSPFPT (314 aa)). Disordered stretches follow at residues 45–65 (VPKG…QSKS) and 122–155 (DSNE…EDTG). Residues 56–65 (DQGTSVQSKS) show a composition bias toward polar residues. Residues Ser-65, Ser-123, Ser-138, Ser-141, and Ser-143 each carry the phosphoserine modification. Lys-182 is covalently cross-linked (Glycyl lysine isopeptide (Lys-Gly) (interchain with G-Cter in SUMO1); alternate). Residue Lys-182 forms a Glycyl lysine isopeptide (Lys-Gly) (interchain with G-Cter in SUMO2); alternate linkage. The tract at residues 188–222 (VGCGGAGRRGDSQECSPRSCPELTSGPRMCPRKEQ) is disordered. Ser-206 and Ser-224 each carry phosphoserine. The PxVxL motif signature appears at 233–246 (FKGKVPMVVLQDIL). Disordered regions lie at residues 250–432 (PPQI…KRLR) and 599–639 (DSDE…VPHG). Composition is skewed to low complexity over residues 282–296 (LSHS…TSSP) and 307–317 (SSTSPFPTSTP). Residue Ser-310 is modified to Phosphoserine. Over residues 329 to 432 (STEKNKLRLQ…RKKEEEKRLR (104 aa)) the composition is skewed to basic and acidic residues. 2 stretches are compositionally biased toward acidic residues: residues 599–610 (DSDEEWEEEEPG) and 618–633 (GDDD…EDDG). The tract at residues 642 to 678 (SEDEGVTEECADPENHKVRQKLKAKEWDEFLAKGKRF) is necessary for homodimerization and competence for chromatin assembly. Residues 660 to 956 (RQKLKAKEWD…TLTASPLGAS (297 aa)) are binds to p60. Thr-722 carries the phosphothreonine modification. The tract at residues 765–790 (LLSNHTGSPRSPSTTYLHTPTPSEDA) is disordered. Positions 767-786 (SNHTGSPRSPSTTYLHTPTP) are enriched in polar residues. 3 positions are modified to phosphoserine: Ser-772, Ser-775, and Ser-803. Disordered regions lie at residues 844–873 (SVPS…KRKS) and 933–956 (SGAG…LGAS). Residues 855-866 (SVPSTGPSQGTP) show a composition bias toward polar residues. Residue Thr-865 is modified to Phosphothreonine. Ser-868, Ser-873, and Ser-951 each carry phosphoserine.

The protein belongs to the CHAF1A family. As to quaternary structure, homodimer. Part of the CAF-1 complex that contains RBBP4, CHAF1B and CHAF1A. CHAF1A binds directly to CHAF1B. Only minor amounts of RBBP4 are complexed with CHAF1A and CHAF1B in G1 phase. Interacts with PCNA; the interaction is direct. Interacts (via the PxVxL motif) with CBX5; the interaction is direct. Interacts with MBD1. Interacts with histones H3.1, H3.2 and H3.1t.

The protein resides in the nucleus. Functionally, acts as a component of the histone chaperone complex chromatin assembly factor 1 (CAF-1), which assembles histone octamers onto DNA during replication and repair. CAF-1 performs the first step of the nucleosome assembly process, bringing newly synthesized histones H3 and H4 to replicating DNA; histones H2A/H2B can bind to this chromatin precursor subsequent to DNA replication to complete the histone octamer. It may play a role in heterochromatin maintenance in proliferating cells by bringing newly synthesized cbx proteins to heterochromatic DNA replication foci. The sequence is that of Chromatin assembly factor 1 subunit A from Homo sapiens (Human).